Consider the following 196-residue polypeptide: Large ribosomal subunit protein eL15 (196 aa).

Residues 69-98 (RKGGSRKQRHKAGRRSKRQGVNRLSRRKSI) show a composition bias toward basic residues. Disordered regions lie at residues 69–100 (RKGG…SIQR) and 161–196 (FRGL…RQGK). Over residues 186–196 (PSVTGNDRQGK) the composition is skewed to polar residues.

The protein belongs to the eukaryotic ribosomal protein eL15 family.

The sequence is that of Large ribosomal subunit protein eL15 from Halorubrum lacusprofundi (strain ATCC 49239 / DSM 5036 / JCM 8891 / ACAM 34).